A 170-amino-acid chain; its full sequence is Elicitin-like protein 1 (170 aa).

The first 19 residues, 1–19 (MFSKTLVVLAAVAAVTVNG), serve as a signal peptide directing secretion. 3 disulfide bridges follow: Cys25/Cys91, Cys47/Cys76, and Cys71/Cys118. The interval 122 to 170 (GGGSTPTTAPPTSTTPTTAPPTGTTPTTAPPAGTTPGVTPSPTTPKPAC) is disordered. The span at 126-162 (TPTTAPPTSTTPTTAPPTGTTPTTAPPAGTTPGVTPS) shows a compositional bias: low complexity.

It belongs to the elicitin family.

It is found in the secreted. In terms of biological role, induces local and distal defense responses (incompatible hypersensitive reaction) in plants from the solanaceae and cruciferae families. Elicits leaf necrosis and causes the accumulation of pathogenesis-related proteins. Might interact with the lipidic molecules of the plasma membrane. This is Elicitin-like protein 1 (POD-1) from Pythium oligandrum (Mycoparasitic fungus).